The following is a 289-amino-acid chain: ATP synthase gamma chain (289 aa).

It belongs to the ATPase gamma chain family. In terms of assembly, F-type ATPases have 2 components, CF(1) - the catalytic core - and CF(0) - the membrane proton channel. CF(1) has five subunits: alpha(3), beta(3), gamma(1), delta(1), epsilon(1). CF(0) has three main subunits: a, b and c.

The protein resides in the cell membrane. Functionally, produces ATP from ADP in the presence of a proton gradient across the membrane. The gamma chain is believed to be important in regulating ATPase activity and the flow of protons through the CF(0) complex. This chain is ATP synthase gamma chain, found in Lawsonia intracellularis (strain PHE/MN1-00).